The chain runs to 269 residues: Intermembrane phospholipid transport system ATP-binding protein MlaF (269 aa).

The 237-residue stretch at 9-245 (VDMRDVSFTR…PDPRVRQFLD (237 aa)) folds into the ABC transporter domain. ATP is bound at residue 41–48 (GPSGIGKT).

The protein belongs to the ABC transporter superfamily. MlaF family. In terms of assembly, the complex is composed of two ATP-binding proteins (MlaF), two transmembrane proteins (MlaE), two cytoplasmic solute-binding proteins (MlaB) and six periplasmic solute-binding proteins (MlaD).

The protein resides in the cell inner membrane. In terms of biological role, part of the ABC transporter complex MlaFEDB, which is involved in a phospholipid transport pathway that maintains lipid asymmetry in the outer membrane by retrograde trafficking of phospholipids from the outer membrane to the inner membrane. Responsible for energy coupling to the transport system. The sequence is that of Intermembrane phospholipid transport system ATP-binding protein MlaF from Escherichia coli O157:H7.